We begin with the raw amino-acid sequence, 270 residues long: Pyrroline-5-carboxylate reductase (270 aa).

It belongs to the pyrroline-5-carboxylate reductase family.

The protein localises to the cytoplasm. The catalysed reaction is L-proline + NADP(+) = (S)-1-pyrroline-5-carboxylate + NADPH + 2 H(+). It catalyses the reaction L-proline + NAD(+) = (S)-1-pyrroline-5-carboxylate + NADH + 2 H(+). The protein operates within amino-acid biosynthesis; L-proline biosynthesis; L-proline from L-glutamate 5-semialdehyde: step 1/1. In terms of biological role, catalyzes the reduction of 1-pyrroline-5-carboxylate (PCA) to L-proline. This chain is Pyrroline-5-carboxylate reductase, found in Corynebacterium melassecola.